Consider the following 2179-residue polypeptide: Voltage-dependent L-type calcium channel subunit alpha-1D (2179 aa).

Disordered regions lie at residues 1–21 (MMMM…EDHA), 30–49 (TRLP…SKQT), and 64–100 (KAAQ…SSNS). The Cytoplasmic segment spans residues 1–126 (MMMMMMMKKM…RACISIVEWK (126 aa)). Residues 38 to 49 (GPTSQPNSSKQT) are compositionally biased toward polar residues. The span at 82-93 (QRKRQQYAKSKK) shows a compositional bias: basic residues. The stretch at 113–409 (NPIRRACISI…LVLGVLSGEF (297 aa)) is one I repeat. The helical transmembrane segment at 127–145 (PFDIFILLAIFANCVALAI) threads the bilayer. Residues 146–163 (YIPFPEDDSNSTNHNLEK) lie on the Extracellular side of the membrane. Residues 164-183 (VEYAFLIIFTVETFLKIIAY) form a helical membrane-spanning segment. At 184–195 (GLLLHPNAYVRN) the chain is on the cytoplasmic side. Residues 196–214 (GWNLLDFVIVIVGLFSVIL) traverse the membrane as a helical segment. The Extracellular segment spans residues 215 to 235 (EQLTKETEGGNHSSGKSGGFD). Residues 236 to 254 (VKALRAFRVLRPLRLVSGV) traverse the membrane as a helical segment. Residues 255-273 (PSLQVVLNSIIKAMVPLLH) lie on the Cytoplasmic side of the membrane. Residues 274 to 293 (IALLVLFVIIIYAIIGLELF) traverse the membrane as a helical segment. At 294 to 381 (IGKMHKTCFF…WVNDAIGWEW (88 aa)) the chain is on the extracellular side. Glutamate 364 is a Ca(2+) binding site. The chain crosses the membrane as a helical span at residues 382–406 (PWVYFVSLIILGSFFVLNLVLGVLS). The Cytoplasmic portion of the chain corresponds to 407 to 543 (GEFSKEREKA…RRCRAAVKSV (137 aa)). The segment at 429-446 (QQLEEDLKGYLDWITQAE) is binding to the beta subunit. The interval 449-480 (DPENEEEGGEEGKRNTSMPTSETESVNTENVS) is disordered. The span at 463–479 (NTSMPTSETESVNTENV) shows a compositional bias: polar residues. The II repeat unit spans residues 529-775 (NRFNRRRCRA…VFLAIAVDNL (247 aa)). A helical transmembrane segment spans residues 544 to 563 (TFYWLVIVLVFLNTLTISSE). Residues 564-578 (HYNQPDWLTQIQDIA) lie on the Extracellular side of the membrane. The chain crosses the membrane as a helical span at residues 579–597 (NKVLLALFTCEMLVKMYSL). The Cytoplasmic portion of the chain corresponds to 598–605 (GLQAYFVS). Residues 606-624 (LFNRFDCFVVCGGITETIL) form a helical membrane-spanning segment. At 625-634 (VELELMSPLG) the chain is on the extracellular side. The chain crosses the membrane as a helical span at residues 635–653 (VSVFRCVRLLRIFKVTRHW). At 654 to 672 (TSLSNLVASLLNSMKSIAS) the chain is on the cytoplasmic side. A helical transmembrane segment spans residues 673 to 693 (LLLLLFLFIIIFSLLGMQLFG). Topologically, residues 694–747 (GKFNFDETQTKRSTFDNFPQALLTVFQILTGEDWNAVMYDGIMAYGGPSSSGMI) are extracellular. Glutamate 725 contributes to the Ca(2+) binding site. A helical membrane pass occupies residues 748-772 (VCIYFIILFICGNYILLNVFLAIAV). Residues 771 to 810 (AVDNLADAESLNTAQKEEAEEKERKKIARKESLENKKNNK) are a coiled coil. The Cytoplasmic segment spans residues 773-906 (DNLADAESLN…VGCHKLINHH (134 aa)). Over residues 786–810 (KEEAEEKERKKIARKESLENKKNNK) the composition is skewed to basic and acidic residues. Positions 786-870 (KEEAEEKERK…AGPRPRRISE (85 aa)) are disordered. Polar residues predominate over residues 811–822 (PEVNQIANSDNK). Residues 845-858 (VGEEEEEEEEDEPE) are compositionally biased toward acidic residues. One copy of the III repeat lies at 893–1175 (NPIRVGCHKL…IFVGFVIVTF (283 aa)). Residues 907–925 (IFTNLILVFIMLSSAALAA) traverse the membrane as a helical segment. At 926 to 941 (EDPIRSHSFRNTILGY) the chain is on the extracellular side. The chain crosses the membrane as a helical span at residues 942 to 961 (FDYAFTAIFTVEILLKMTTF). The Cytoplasmic segment spans residues 962-973 (GAFLHKGAFCRN). Residues 974 to 992 (YFNLLDMLVVGVSLVSFGI) traverse the membrane as a helical segment. The Extracellular portion of the chain corresponds to 993–998 (QSSAIS). A helical membrane pass occupies residues 999–1018 (VVKILRVLRVLRPLRAINRA). The Cytoplasmic portion of the chain corresponds to 1019-1037 (KGLKHVVQCVFVAIRTIGN). A helical transmembrane segment spans residues 1038 to 1057 (IMIVTTLLQFMFACIGVQLF). Residues 1058-1147 (KGKFYRCTDE…VGPVYNYRVE (90 aa)) lie on the Extracellular side of the membrane. Residues 1095–1185 (RIWQNSDFNF…QEQGEKEYKN (91 aa)) form a dihydropyridine binding region. Ca(2+) is bound at residue glutamate 1121. Residues 1148–1168 (ISIFFIIYIIIVAFFMMNIFV) traverse the membrane as a helical segment. The Cytoplasmic segment spans residues 1169-1225 (GFVIVTFQEQGEKEYKNCELDKNQRQCVEYALKARPLRRYIPKNPYQYKFWYVVNSS). The IV repeat unit spans residues 1212–1487 (NPYQYKFWYV…LFVAVIMDNF (276 aa)). The helical transmembrane segment at 1226–1244 (PFEYMMFVLIMLNTLCLAM) threads the bilayer. Residues 1245 to 1259 (QHYEQSKMFNDAMDI) are Extracellular-facing. The helical transmembrane segment at 1260–1279 (LNMVFTGVFTVEMVLKVIAF) threads the bilayer. At 1280-1286 (KPKGYFS) the chain is on the cytoplasmic side. Residues 1287 to 1308 (DAWNTFDSLIVIGSIIDVALSE) traverse the membrane as a helical segment. The Extracellular segment spans residues 1309–1333 (ADPSESETIPLPTATPGNSEESNRI). Residues 1334-1353 (SITFFRLFRVMRLVKLLSRG) form a helical membrane-spanning segment. Residues 1354 to 1372 (EGIRTLLWTFIKSFQALPY) are Cytoplasmic-facing. A helical membrane pass occupies residues 1373 to 1392 (VALLIAMLFFIYAVIGMQMF). At 1393–1459 (GKVAMRDNNQ…GEEYTCGSNF (67 aa)) the chain is on the extracellular side. Positions 1440–1506 (LCDPDSDYNP…LGPHHLDEFK (67 aa)) are dihydropyridine binding. The segment at 1452–1495 (EYTCGSNFAIVYFISFYMLCAFLIINLFVAVIMDNFDYLTRDWS) is phenylalkylamine binding. The helical transmembrane segment at 1460–1484 (AIVYFISFYMLCAFLIINLFVAVIM) threads the bilayer. Residues 1485–2179 (DNFDYLTRDW…ADEMICITTL (695 aa)) lie on the Cytoplasmic side of the membrane. 3 disordered regions span residues 1704–1789 (LLGN…AHGK), 1896–1941 (FERP…RSSF), and 2135–2171 (GDMG…DLAD). A compositionally biased stretch (polar residues) spans 1764-1782 (SIGKQAPTSTNANLNNANM). A compositionally biased stretch (acidic residues) spans 2156–2171 (SDEEPDPGREEEDLAD).

This sequence belongs to the calcium channel alpha-1 subunit (TC 1.A.1.11) family. CACNA1D subfamily. As to quaternary structure, voltage-dependent calcium channels are multisubunit complexes, consisting of alpha-1, alpha-2, beta and delta subunits in a 1:1:1:1 ratio. The channel activity is directed by the pore-forming and voltage-sensitive alpha-1 subunit. In many cases, this subunit is sufficient to generate voltage-sensitive calcium channel activity. The auxiliary subunits beta and alpha-2/delta linked by a disulfide bridge regulate the channel activity. Interacts (via IQ domain) with CABP1 and CABP4 in a calcium independent manner. Interacts with RIMBP2. In terms of tissue distribution, expressed in the inner hair cells (IHC) of the cochlea.

It localises to the membrane. It catalyses the reaction Ca(2+)(in) = Ca(2+)(out). In terms of biological role, voltage-sensitive calcium channels (VSCC) mediate the entry of calcium ions into excitable cells and are also involved in a variety of calcium-dependent processes, including muscle contraction, hormone or neurotransmitter release, gene expression, cell motility, cell division and cell death. The isoform alpha-1D gives rise to L-type calcium currents. Long-lasting (L-type) calcium channels belong to the 'high-voltage activated' (HVA) group. They are blocked by dihydropyridines (DHP), phenylalkylamines, and by benzothiazepines. The polypeptide is Voltage-dependent L-type calcium channel subunit alpha-1D (Cacna1d) (Mus musculus (Mouse)).